The chain runs to 351 residues: Homoserine O-acetyltransferase (351 aa).

Positions 51-334 constitute an AB hydrolase-1 domain; it reads VIWVLHALTG…IYGHDAFLIE (284 aa). Ser-146 functions as the Nucleophile in the catalytic mechanism. Position 212 (Arg-212) interacts with substrate. Active-site residues include Asp-299 and His-328. A substrate-binding site is contributed by Asp-329.

The protein belongs to the AB hydrolase superfamily. MetX family. As to quaternary structure, homodimer.

The protein resides in the cytoplasm. It catalyses the reaction L-homoserine + acetyl-CoA = O-acetyl-L-homoserine + CoA. It participates in amino-acid biosynthesis; L-methionine biosynthesis via de novo pathway; O-acetyl-L-homoserine from L-homoserine: step 1/1. Transfers an acetyl group from acetyl-CoA to L-homoserine, forming acetyl-L-homoserine. This chain is Homoserine O-acetyltransferase, found in Cyclobacterium marinum (strain ATCC 25205 / DSM 745 / LMG 13164 / NCIMB 1802) (Flectobacillus marinus).